We begin with the raw amino-acid sequence, 709 residues long: Elongation factor G (709 aa).

A tr-type G domain is found at 8–297 (ANTRNIGIMA…AVIDYLPSPL (290 aa)). Residues 17-24 (AHVDAGKT), 81-85 (DTPGH), and 135-138 (NKMD) contribute to the GTP site.

This sequence belongs to the TRAFAC class translation factor GTPase superfamily. Classic translation factor GTPase family. EF-G/EF-2 subfamily.

Its subcellular location is the cytoplasm. Functionally, catalyzes the GTP-dependent ribosomal translocation step during translation elongation. During this step, the ribosome changes from the pre-translocational (PRE) to the post-translocational (POST) state as the newly formed A-site-bound peptidyl-tRNA and P-site-bound deacylated tRNA move to the P and E sites, respectively. Catalyzes the coordinated movement of the two tRNA molecules, the mRNA and conformational changes in the ribosome. The sequence is that of Elongation factor G from Lactococcus lactis subsp. cremoris (strain MG1363).